The chain runs to 246 residues: MDWQKITEKMCDFIQEKVKNSQSQGVVLGLSGGIDSALVATLCKRALKENVFALLMPTQISNKANLEDALRLCADLNLEYKIIEIQSILDAFIKQSENTTLVSLGNFAARIRMSLLYDYSALKNSLVIGTSNKSELLLGYGTIYGDLACAFNPIGSLYKSEIYALAKYLNLHENFIKKAPSADLWENQSDEADLGFSYTKIDEGLKALETNDEKLLRTLDPSLIAMLKNRMQKNAFKGKMPEILEI.

29 to 36 (GLSGGIDS) is an ATP binding site. Position 35 (Asp-35) interacts with Mg(2+). Arg-110 contributes to the deamido-NAD(+) binding site. Thr-130 is an ATP binding site. Mg(2+) is bound at residue Glu-135. Lys-159 and Ser-181 together coordinate ATP.

It belongs to the NAD synthetase family. As to quaternary structure, homodimer.

The enzyme catalyses deamido-NAD(+) + NH4(+) + ATP = AMP + diphosphate + NAD(+) + H(+). Its pathway is cofactor biosynthesis; NAD(+) biosynthesis; NAD(+) from deamido-NAD(+) (ammonia route): step 1/1. Its function is as follows. Catalyzes the ATP-dependent amidation of deamido-NAD to form NAD. Uses ammonia as a nitrogen source. This chain is NH(3)-dependent NAD(+) synthetase, found in Campylobacter jejuni subsp. jejuni serotype O:2 (strain ATCC 700819 / NCTC 11168).